The primary structure comprises 520 residues: Probable E3 ubiquitin-protein ligase rbrA (520 aa).

The segment covering 1-42 has biased composition (acidic residues); that stretch reads MTDDEMYEDYDVDDDSAEESGNESLDDTEYDDAATQEFDFDE. Residues 1–51 form a disordered region; that stretch reads MTDDEMYEDYDVDDDSAEESGNESLDDTEYDDAATQEFDFDENQPQRSLGK. Residues 135–354 form a TRIAD supradomain region; it reads GNVSCLICLE…GGYYNCNKYD (220 aa). C139, C142, C156, H158, C161, C164, C184, C189, C228, C233, C250, C252, C257, C260, H268, C273, C300, and C303 together coordinate Zn(2+). The RING-type 1 zinc finger occupies 139–189; it reads CLICLEDYPPTQTFALICNHRYCLPCYKNYLEIKVSEGPECIYTPCPAPKC. The IBR-type zinc-finger motif lies at 208–273; that stretch reads ERFNNFILKS…EIGDHMPCPC (66 aa). The RING-type 2; atypical zinc finger occupies 300-333; sequence CPECRSPIEKNGGCMHMTCRKNAGGCGFEFCWLC. C313 is a catalytic residue. Positions 318, 325, 330, 333, 340, and 350 each coordinate Zn(2+).

This sequence belongs to the RBR family.

The catalysed reaction is [E2 ubiquitin-conjugating enzyme]-S-ubiquitinyl-L-cysteine + [acceptor protein]-L-lysine = [E2 ubiquitin-conjugating enzyme]-L-cysteine + [acceptor protein]-N(6)-ubiquitinyl-L-lysine.. It participates in protein modification; protein ubiquitination. Its function is as follows. Might act as an E3 ubiquitin-protein ligase. Appears to be required for normal cell-type proportioning and cell sorting during multicellular development. In addition to being necessary for a normal percentage of prestalk cells and the organization of the slug, rbrA is also necessary for spore cell viability. The chain is Probable E3 ubiquitin-protein ligase rbrA (rbrA) from Dictyostelium discoideum (Social amoeba).